Here is a 394-residue protein sequence, read N- to C-terminus: Elongation factor Tu 1 (394 aa).

One can recognise a tr-type G domain in the interval 10–204 (KPHVNVGTIG…HLDTYIPEPE (195 aa)). The interval 19–26 (GHVDHGKT) is G1. 19 to 26 (GHVDHGKT) lines the GTP pocket. Position 26 (T26) interacts with Mg(2+). The G2 stretch occupies residues 60-64 (GITIN). A G3 region spans residues 81–84 (DCPG). GTP contacts are provided by residues 81–85 (DCPGH) and 136–139 (NKCD). Residues 136-139 (NKCD) form a G4 region. The G5 stretch occupies residues 174–176 (SAL).

Belongs to the TRAFAC class translation factor GTPase superfamily. Classic translation factor GTPase family. EF-Tu/EF-1A subfamily. As to quaternary structure, monomer.

Its subcellular location is the cytoplasm. The enzyme catalyses GTP + H2O = GDP + phosphate + H(+). Its function is as follows. GTP hydrolase that promotes the GTP-dependent binding of aminoacyl-tRNA to the A-site of ribosomes during protein biosynthesis. The chain is Elongation factor Tu 1 from Haemophilus influenzae (strain 86-028NP).